We begin with the raw amino-acid sequence, 369 residues long: Phenylalanine--tRNA ligase alpha subunit (369 aa).

Residue glutamate 269 coordinates Mg(2+).

This sequence belongs to the class-II aminoacyl-tRNA synthetase family. Phe-tRNA synthetase alpha subunit type 1 subfamily. In terms of assembly, tetramer of two alpha and two beta subunits. Mg(2+) serves as cofactor.

The protein localises to the cytoplasm. The enzyme catalyses tRNA(Phe) + L-phenylalanine + ATP = L-phenylalanyl-tRNA(Phe) + AMP + diphosphate + H(+). The sequence is that of Phenylalanine--tRNA ligase alpha subunit from Nitrobacter winogradskyi (strain ATCC 25391 / DSM 10237 / CIP 104748 / NCIMB 11846 / Nb-255).